A 293-amino-acid chain; its full sequence is Caspase-6 (293 aa).

Positions 1–20 (MSSEPPPRRARGPGEEQNMT) are disordered. The propeptide occupies 1–23 (MSSEPPPRRARGPGEEQNMTEID). Positions 42 to 44 (KRR) are tri-arginine exosite. Residue S79 is modified to Phosphoserine. Residue H121 is part of the active site. Residues 125–142 (NHIYAYDAKIEIQTLTGL) form a 130's region region. C163 is a catalytic residue. Positions 180-193 (HRTDTPDANLTQVD) are excised as a propeptide. S257 bears the Phosphoserine mark. S-palmitoyl cysteine attachment occurs at residues C264 and C277.

This sequence belongs to the peptidase C14A family. As to quaternary structure, heterotetramer that consists of two anti-parallel arranged heterodimers, each one formed by a 18 kDa (p18) and a 11 kDa (p11) subunits. Interacts with BIRC6/bruce. Interacts with RIPK3. Heterotetramer that consists of two anti-parallel arranged heterodimers, each one formed by a 18 kDa (Caspase-6 subunit p18) and a 11 kDa (Caspase-6 subunit p11) subunit. Post-translationally, phosphorylated by NUAK1; phosphorylation inhibits self-activation. Phosphorylation at Ser-257 by AMP-activated protein kinase (PRKAA1 or PRKAA2) inhibits autocleavage, preventing caspase activation, thereby preventing hepatocyte apoptosis. Palmitoylation by ZDHHC17 blocks dimerization and subsequent activation, leading to inhibit the cysteine protease activity. In terms of processing, can be cleaved and activated by different caspases, depending on the context. Cleaved and activated by caspase-8 (CASP8) and subsequently by caspase-3 (CASP3). Can also undergo autoactivation by mediating autocleavage at Asp-179 and Asp-193, while it is not able to cleave its N-terminal disordered prodomain. Cleaved and activated by CASP1, possibly in the context of inflammation.

The protein resides in the cytoplasm. The protein localises to the nucleus. The catalysed reaction is Strict requirement for Asp at position P1 and has a preferred cleavage sequence of Val-Glu-His-Asp-|-.. During activation, the N-terminal disordered prodomain is removed by cleavage. Concomitantly, double cleavage gives rise to a large 18-kDa and a small 11-kDa subunit. The two large and two small subunits then assemble to form the active CASP6 complex. Can be cleaved and activated by different caspases, depending on the context. Cleaved and activated by caspase-8 (CASP8) and subsequently by caspase-3 (CASP3). Can also undergo autoactivation by mediating autocleavage at Asp-179 and Asp-193, while it is not able to cleave its N-terminal disordered prodomain. Intramolecular cleavage at Asp-193 is a prerequisite for CASP6 self-activation. Cleaved and activated by CASP1 in neurons, possibly in the context of inflammation. Phosphorylation at Ser-257 inhibits autocleavage, preventing caspase activation. In terms of biological role, cysteine protease that plays essential roles in programmed cell death, axonal degeneration, development and innate immunity. Acts as a non-canonical executioner caspase during apoptosis: localizes in the nucleus and cleaves the nuclear structural protein NUMA1 and lamin A/LMNA thereby inducing nuclear shrinkage and fragmentation. Lamin-A/LMNA cleavage is required for chromatin condensation and nuclear disassembly during apoptotic execution. Acts as a regulator of liver damage by promoting hepatocyte apoptosis: in absence of phosphorylation by AMP-activated protein kinase (AMPK), catalyzes cleavage of BID, leading to cytochrome c release, thereby participating in nonalcoholic steatohepatitis. Cleaves PARK7/DJ-1 in cells undergoing apoptosis. Involved in intrinsic apoptosis by mediating cleavage of RIPK1. Furthermore, cleaves many transcription factors such as NF-kappa-B and cAMP response element-binding protein/CREBBP. Cleaves phospholipid scramblase proteins XKR4 and XKR9. In addition to apoptosis, involved in different forms of programmed cell death. Plays an essential role in defense against viruses by acting as a central mediator of the ZBP1-mediated pyroptosis, apoptosis, and necroptosis (PANoptosis), independently of its cysteine protease activity. PANoptosis is a unique inflammatory programmed cell death, which provides a molecular scaffold that allows the interactions and activation of machinery required for inflammasome/pyroptosis, apoptosis and necroptosis. Mechanistically, interacts with RIPK3 and enhances the interaction between RIPK3 and ZBP1, leading to ZBP1-mediated inflammasome activation and cell death. Plays an essential role in axon degeneration during axon pruning which is the remodeling of axons during neurogenesis but not apoptosis. Regulates B-cell programs both during early development and after antigen stimulation. In Bos taurus (Bovine), this protein is Caspase-6.